The following is a 271-amino-acid chain: Mannosyl-3-phosphoglycerate phosphatase (271 aa).

Asp13 (nucleophile) is an active-site residue. Residues Asp13, Asp15, and Asp214 each coordinate Mg(2+).

The protein belongs to the HAD-like hydrolase superfamily. MPGP family. Requires Mg(2+) as cofactor.

The protein resides in the cytoplasm. The catalysed reaction is 2-O-(alpha-D-mannosyl)-3-phosphoglycerate + H2O = (2R)-2-O-(alpha-D-mannosyl)-glycerate + phosphate. The chain is Mannosyl-3-phosphoglycerate phosphatase from Escherichia coli O127:H6 (strain E2348/69 / EPEC).